We begin with the raw amino-acid sequence, 330 residues long: Probable cytosolic iron-sulfur protein assembly protein ciao1-A (330 aa).

7 WD repeats span residues 14 to 53 (HPDSRCWYVAWNPKGTLLASCGGDRAIRIWGREGDSWECK), 59 to 98 (GHQRAVRKVAWSPCGNYLASASFDATTCIWKKKNDDFECL), 103 to 142 (GHENEVKCVAWAPSGNQLATCSRDKSVWIWEVDEEDEYEC), 148 to 187 (SHTQDVKHVVWHPTQELLASCSYDNNVCVYKEEDDDWECR), 192 to 231 (GHTSTVWGLTFDPSGQRLASCSDDRTVKIWKECQPGGGQD), 243 to 282 (FHGRTVYDIAWCPLTGALATACGDDGVRVFKEDETADPDQ), and 294 to 330 (AHSQDVNCIAWHPKEAGLLVSCSDNGEIAVWNYQSEV).

This sequence belongs to the WD repeat CIA1 family. Component of the CIA complex.

In terms of biological role, key component of the cytosolic iron-sulfur protein assembly (CIA) complex, a multiprotein complex that mediates the incorporation of iron-sulfur cluster into extramitochondrial Fe/S proteins. In Salmo salar (Atlantic salmon), this protein is Probable cytosolic iron-sulfur protein assembly protein ciao1-A (ciao1a).